We begin with the raw amino-acid sequence, 227 residues long: tRNA pseudouridine synthase B (227 aa).

The Nucleophile role is filled by D42.

Belongs to the pseudouridine synthase TruB family. Type 1 subfamily.

The catalysed reaction is uridine(55) in tRNA = pseudouridine(55) in tRNA. Functionally, responsible for synthesis of pseudouridine from uracil-55 in the psi GC loop of transfer RNAs. This Ureaplasma parvum serovar 3 (strain ATCC 27815 / 27 / NCTC 11736) protein is tRNA pseudouridine synthase B.